Reading from the N-terminus, the 405-residue chain is MREKIVLAYSGGLDTSIIIPWLKENYSCDVIAMVGDVGQGDDIDAVVAKAHKTGASKVIVKDLREEFLTQYVYPAISTGAVYEHKYLLGTSLARPPIAKAQVEVALAEGATAVSHGCTGKGNDQVRFEHAFQALAPELKIIAPWREWTLKSREDCLDYAEAHGISVAQSREKIHSRDRNLLHVSHEGGELEDPNNAPLDTTWTWTKSPQEAPDRVEEVTIGFEGGVPVSINGMKLEPLALIELLNEIGARNAIGRIDLVENRFVGIKSRGCYETPGGSLLLAAHRELEALCLDRDTLHYKQEVALKWAELVYFGLWFTPLRESLDAFVASTQKNIAGAVKLALYKGNIAVAGRTSPKSLYRPDIASFTMGAGYDQKDAEGFIRILGLPARSRALIENAGKEKVSK.

8–16 (AYSGGLDTS) is an ATP binding site. Positions 86 and 91 each coordinate L-citrulline. Glycine 116 provides a ligand contact to ATP. Residues threonine 118, asparagine 122, and aspartate 123 each contribute to the L-aspartate site. Asparagine 122 contributes to the L-citrulline binding site. Residues arginine 126, serine 175, serine 184, glutamate 260, and tyrosine 272 each contribute to the L-citrulline site.

It belongs to the argininosuccinate synthase family. Type 1 subfamily. As to quaternary structure, homotetramer.

Its subcellular location is the cytoplasm. The enzyme catalyses L-citrulline + L-aspartate + ATP = 2-(N(omega)-L-arginino)succinate + AMP + diphosphate + H(+). It participates in amino-acid biosynthesis; L-arginine biosynthesis; L-arginine from L-ornithine and carbamoyl phosphate: step 2/3. This chain is Argininosuccinate synthase, found in Koribacter versatilis (strain Ellin345).